A 118-amino-acid polypeptide reads, in one-letter code: UPF0102 protein Sde_3146 (118 aa).

The protein belongs to the UPF0102 family.

The protein is UPF0102 protein Sde_3146 of Saccharophagus degradans (strain 2-40 / ATCC 43961 / DSM 17024).